The following is a 1171-amino-acid chain: DNA-directed RNA polymerase subunit beta' (1171 aa).

Residues C60, C62, C75, and C78 each coordinate Zn(2+). Residues 299-319 (GRRGKPVTGPGNRPLKSLSDM) are disordered. The Mg(2+) site is built by D449, D451, and D453. The Zn(2+) site is built by C790, C864, C871, and C874.

Belongs to the RNA polymerase beta' chain family. In terms of assembly, the RNAP catalytic core consists of 2 alpha, 1 beta, 1 beta' and 1 omega subunit. When a sigma factor is associated with the core the holoenzyme is formed, which can initiate transcription. Mg(2+) is required as a cofactor. Zn(2+) serves as cofactor.

The enzyme catalyses RNA(n) + a ribonucleoside 5'-triphosphate = RNA(n+1) + diphosphate. DNA-dependent RNA polymerase catalyzes the transcription of DNA into RNA using the four ribonucleoside triphosphates as substrates. This chain is DNA-directed RNA polymerase subunit beta', found in Alkaliphilus metalliredigens (strain QYMF).